A 331-amino-acid polypeptide reads, in one-letter code: Probable mannose-1-phosphate guanylyltransferase 3 (331 aa).

Lys3 lines the diphosphate pocket. The GDP-alpha-D-mannose site is built by Gly66, Asn90, Asp92, Gly127, and Asn154.

It belongs to the transferase hexapeptide repeat family.

It catalyses the reaction alpha-D-mannose 1-phosphate + GTP + H(+) = GDP-alpha-D-mannose + diphosphate. It participates in nucleotide-sugar biosynthesis; GDP-alpha-D-mannose biosynthesis; GDP-alpha-D-mannose from alpha-D-mannose 1-phosphate (GTP route): step 1/1. Functionally, catalyzes a reaction of the Smirnoff-Wheeler pathway, the major route to ascorbate biosynthesis in plants. This chain is Probable mannose-1-phosphate guanylyltransferase 3, found in Arabidopsis thaliana (Mouse-ear cress).